Reading from the N-terminus, the 142-residue chain is FAD synthase (142 aa).

Residues 9 to 10 (TF), 14 to 17 (HPGH), and aspartate 92 contribute to the ATP site.

This sequence belongs to the archaeal FAD synthase family. As to quaternary structure, homodimer. A divalent metal cation serves as cofactor.

It carries out the reaction FMN + ATP + H(+) = FAD + diphosphate. It functions in the pathway cofactor biosynthesis; FAD biosynthesis; FAD from FMN: step 1/1. In terms of biological role, catalyzes the transfer of the AMP portion of ATP to flavin mononucleotide (FMN) to produce flavin adenine dinucleotide (FAD) coenzyme. In Methanohalophilus mahii (strain ATCC 35705 / DSM 5219 / SLP), this protein is FAD synthase.